We begin with the raw amino-acid sequence, 141 residues long: Large ribosomal subunit protein uL14 (141 aa).

Belongs to the universal ribosomal protein uL14 family. Part of the 50S ribosomal subunit. Forms a cluster with proteins L3 and L24e, part of which may contact the 16S rRNA in 2 intersubunit bridges.

Binds to 23S rRNA. Forms part of two intersubunit bridges in the 70S ribosome. The sequence is that of Large ribosomal subunit protein uL14 from Pyrococcus horikoshii (strain ATCC 700860 / DSM 12428 / JCM 9974 / NBRC 100139 / OT-3).